The sequence spans 113 residues: Nucleoid-associated protein THA_1374 (113 aa).

This sequence belongs to the YbaB/EbfC family. In terms of assembly, homodimer.

Its subcellular location is the cytoplasm. The protein resides in the nucleoid. Binds to DNA and alters its conformation. May be involved in regulation of gene expression, nucleoid organization and DNA protection. This chain is Nucleoid-associated protein THA_1374, found in Thermosipho africanus (strain TCF52B).